The primary structure comprises 485 residues: Inosine-5'-monophosphate dehydrogenase (485 aa).

CBS domains follow at residues 99–154 (IVED…LVKE) and 156–215 (MTKD…VRDE). NAD(+)-binding positions include Asp-247 and 294–296 (GIG). Residues Gly-296 and Gly-298 each coordinate K(+). An IMP-binding site is contributed by Ser-299. Cys-301 is a binding site for K(+). The Thioimidate intermediate role is filled by Cys-301. Residues 334–336 (DGG), 357–358 (GN), and 381–385 (YRGMG) each bind IMP. Residue Arg-397 is the Proton acceptor of the active site. Residue Glu-412 coordinates IMP. Positions 466, 467, and 468 each coordinate K(+).

It belongs to the IMPDH/GMPR family. As to quaternary structure, homotetramer. Requires K(+) as cofactor.

It carries out the reaction IMP + NAD(+) + H2O = XMP + NADH + H(+). It functions in the pathway purine metabolism; XMP biosynthesis via de novo pathway; XMP from IMP: step 1/1. With respect to regulation, mycophenolic acid (MPA) is a non-competitive inhibitor that prevents formation of the closed enzyme conformation by binding to the same site as the amobile flap. In contrast, mizoribine monophosphate (MZP) is a competitive inhibitor that induces the closed conformation. MPA is a potent inhibitor of mammalian IMPDHs but a poor inhibitor of the bacterial enzymes. MZP is a more potent inhibitor of bacterial IMPDH. In terms of biological role, catalyzes the conversion of inosine 5'-phosphate (IMP) to xanthosine 5'-phosphate (XMP), the first committed and rate-limiting step in the de novo synthesis of guanine nucleotides, and therefore plays an important role in the regulation of cell growth. This Pyrococcus abyssi (strain GE5 / Orsay) protein is Inosine-5'-monophosphate dehydrogenase.